The following is a 159-amino-acid chain: Ascorbate-specific PTS system EIIA component (159 aa).

The PTS EIIA type-2 domain maps to 9 to 152 (VLKQHHTVRL…TSLFAVIDRV (144 aa)). His-71 functions as the Tele-phosphohistidine intermediate in the catalytic mechanism. Position 71 is a phosphohistidine (His-71).

It is found in the cytoplasm. Functionally, the phosphoenolpyruvate-dependent sugar phosphotransferase system (sugar PTS), a major carbohydrate active transport system, catalyzes the phosphorylation of incoming sugar substrates concomitantly with their translocation across the cell membrane. The enzyme II UlaABC PTS system is involved in ascorbate transport. This chain is Ascorbate-specific PTS system EIIA component (ulaC), found in Mycoplasma pneumoniae (strain ATCC 29342 / M129 / Subtype 1) (Mycoplasmoides pneumoniae).